A 578-amino-acid polypeptide reads, in one-letter code: Protein SIA1 (578 aa).

An N-terminal signal peptide occupies residues 1–28 (MFRNRRILLYARRFFLVWICFLFITSWS).

May be involved in the activation of the plasma membrane proton-ATPase by glucose. This Kluyveromyces lactis (strain ATCC 8585 / CBS 2359 / DSM 70799 / NBRC 1267 / NRRL Y-1140 / WM37) (Yeast) protein is Protein SIA1 (SIA1).